The sequence spans 1001 residues: MKKIRINELARELEVKAHEILERLPELGVTEKKTHSSSIDEDVAIKLRQYYGQDVPDYVHDPNAVDEPATEAHEERHEHEEAHEPAAAPKAAVEPETPVAPAPEAAPAAKEERPAPEEPARPMAPIRPPLASGRPIHPPVGATPPPRPEGPRAAPAPPLPPPAPQVPHAPSPAASSPAMPARPEPPAHHPPSQTPPAAVFAPGRPAPPSAKPLPTTTPRPGQVLSGPRQPFPSSPAPGAPQRPQAIPRPPQQVRPESQRPSGPGAPSAPQRPLAGQPAARPVVPPRPDLVAKLSAPRAPVMPQQPAAPRPGVPKAPSAPVPGQPIYRGPIRPGQPMVAKPGVRPGMPPSRPGGPRPQHPTSRGRIEPGMGAPPPPAEPSRGRPGDRRPVRQQRERTEEEKILRPQRRHVEAGPPPISREITISEGITVKELSEKLDVKANLVMKKLMDRGIFVAINQTLDGKLATEVARDFGASTATVSYEVEAMQSVEEAQDTTDLERRAPVVTIMGHVDHGKTSLLDAIREANVAGREAGGITQHIGAYQVEMKGRKIVFIDTPGHEAFTRMRSRGAKVTDIVILVVAADDGVMPQTLEAIDHAKAAAVPIIVAINKIDKADAQPERIKQQLSDRGLLPEDWGGDVVMVPVSARTQQGLPDLLEMILLVADMQDLKANPSRPAMGTVIEAQLDRGRGPVATVLVRNGTLSVGDFFICGAVFGKVRAMLNDRGTQIRKAEPSTPVEVLGLDSLPEAGDDFQVVTDTAKAKQIVNFRDQRQKEAALAKSSRITLEQLHQQMREGEVKELPVIIKADVGGSAEVLKETLEKLSNDKVKVRVIHSGVGAINESDILLASASNAIVIGFNVRPERNAAATAEQEKVDVRLHTIIYNLTDEIKRAMSGLLAPVFKEVYRGKAEVRETFRISKVGAVAGCQVIDGSIPRDSECRVLRDNIVVHTGKIGSLRRFKDDVSEVKIGMECGITLANFADLKQGDIIEAFATERVATEVFA.

The interval 56–418 (PDYVHDPNAV…VEAGPPPISR (363 aa)) is disordered. Over residues 70-84 (TEAHEERHEHEEAHE) the composition is skewed to basic and acidic residues. Low complexity predominate over residues 85–108 (PAAAPKAAVEPETPVAPAPEAAPA). The segment covering 109-120 (AKEERPAPEEPA) has biased composition (basic and acidic residues). Composition is skewed to pro residues over residues 136–170 (IHPP…PHAP), 180–194 (PARP…PSQT), 204–217 (RPAP…PTTT), 229–252 (QPFP…PPQQ), 305–322 (PAAP…PVPG), and 345–357 (GMPP…PRPQ). Residues 379–410 (SRGRPGDRRPVRQQRERTEEEKILRPQRRHVE) show a composition bias toward basic and acidic residues. The 170-residue stretch at 499–668 (RRAPVVTIMG…LLVADMQDLK (170 aa)) folds into the tr-type G domain. The interval 508–515 (GHVDHGKT) is G1. 508-515 (GHVDHGKT) lines the GTP pocket. The interval 533–537 (GITQH) is G2. Residues 554–557 (DTPG) form a G3 region. GTP contacts are provided by residues 554–558 (DTPGH) and 608–611 (NKID). The interval 608 to 611 (NKID) is G4. Residues 644–646 (SAR) form a G5 region.

Belongs to the TRAFAC class translation factor GTPase superfamily. Classic translation factor GTPase family. IF-2 subfamily.

Its subcellular location is the cytoplasm. One of the essential components for the initiation of protein synthesis. Protects formylmethionyl-tRNA from spontaneous hydrolysis and promotes its binding to the 30S ribosomal subunits. Also involved in the hydrolysis of GTP during the formation of the 70S ribosomal complex. The chain is Translation initiation factor IF-2 from Solibacter usitatus (strain Ellin6076).